The primary structure comprises 558 residues: Galactoside 2-alpha-L-fucosyltransferase (558 aa).

The Cytoplasmic segment spans residues 1 to 43 (MDQNSYRRRSSPIRTTTGGSKSVNFSELLQMKYLSSGTMKLTR). A helical; Signal-anchor for type II membrane protein membrane pass occupies residues 44–64 (TFTTCLIVFSVLVAFSMIFHQ). Residues 65–558 (HPSDSNRIMG…EDISWGLKLV (494 aa)) lie on the Lumenal side of the membrane. N-linked (GlcNAc...) asparagine glycosylation is found at Asn88 and Asn504.

The protein belongs to the glycosyltransferase 37 family. In terms of assembly, homodimer. Interacts with MUR3, XLT2, XXT2 and XXT5. Expressed in roots, stems, leaves, flowers, siliques and seedlings.

It localises to the golgi apparatus. It is found in the golgi stack membrane. The protein localises to the golgi apparatus membrane. Its function is as follows. Involved in cell wall biosynthesis. Is both necessary and sufficient for the addition of the terminal fucosyl residue on xyloglucan side chains, but is not involved in the fucosylation of other cell wall components. Associates with other xyloglucan-synthesizing enzymes to form multiprotein complexes for xyloglucan synthesis in the Golgi. This is Galactoside 2-alpha-L-fucosyltransferase (FUT1) from Arabidopsis thaliana (Mouse-ear cress).